Reading from the N-terminus, the 174-residue chain is Beta-lactoglobulin (174 aa).

Positions 1 to 18 (MKFLLLTVGLALIGAIQA) are cleaved as a signal peptide. Disulfide bonds link Cys79–Cys172 and Cys122–Cys134.

It belongs to the calycin superfamily. Lipocalin family. Monomer.

The protein resides in the secreted. Functionally, lactoglobulin is the primary component of whey, it binds retinol and is probably involved in the transport of that molecule. The polypeptide is Beta-lactoglobulin (LGB) (Notamacropus eugenii (Tammar wallaby)).